Consider the following 934-residue polypeptide: Serine/threonine-protein kinase PknD (934 aa).

The Protein kinase domain occupies 4–296 (YELIRLIGKG…ELRQALQPYL (293 aa)). Residues 10–18 (IGKGGMGEV) and Lys-33 each bind ATP. Catalysis depends on Asp-138, which acts as the Proton acceptor.

The protein belongs to the protein kinase superfamily. Ser/Thr protein kinase family. Post-translationally, autophosphorylated on serine and threonine residues.

It carries out the reaction L-seryl-[protein] + ATP = O-phospho-L-seryl-[protein] + ADP + H(+). The enzyme catalyses L-threonyl-[protein] + ATP = O-phospho-L-threonyl-[protein] + ADP + H(+). Together with the serine/threonine kinase Pkn1, may play a role in the specific interactions with host proteins during intracellular growth. This Chlamydia trachomatis serovar A (strain ATCC VR-571B / DSM 19440 / HAR-13) protein is Serine/threonine-protein kinase PknD.